Reading from the N-terminus, the 239-residue chain is C-8 sterol isomerase erg2 (239 aa).

Asparagine 11 is a glycosylation site (N-linked (GlcNAc...) asparagine). The helical transmembrane segment at 27–47 (KFGFLAVFVAIFAALYSYLDA) threads the bilayer. Asparagine 73 carries an N-linked (GlcNAc...) asparagine glycan.

The protein belongs to the ERG2 family.

It is found in the endoplasmic reticulum membrane. The catalysed reaction is fecosterol = episterol. It participates in steroid metabolism; ergosterol biosynthesis. Functionally, C-8 sterol isomerase; part of the third module of ergosterol biosynthesis pathway that includes the late steps of the pathway. Erg2 catalyzes the reaction which results in unsaturation at C-7 in the B ring of sterols and thus converts fecosterol to episterol. The third module or late pathway involves the ergosterol synthesis itself through consecutive reactions that mainly occur in the endoplasmic reticulum (ER) membrane. Firstly, the squalene synthase erg9 catalyzes the condensation of 2 farnesyl pyrophosphate moieties to form squalene, which is the precursor of all steroids. Squalene synthase is crucial for balancing the incorporation of farnesyl diphosphate (FPP) into sterol and nonsterol isoprene synthesis. Secondly, squalene is converted into lanosterol by the consecutive action of the squalene epoxidase erg1 and the lanosterol synthase erg7. Then, the delta(24)-sterol C-methyltransferase erg6 methylates lanosterol at C-24 to produce eburicol. Eburicol is the substrate of the sterol 14-alpha demethylase encoded by cyp51A and cyp51B, to yield 4,4,24-trimethyl ergosta-8,14,24(28)-trienol. The C-14 reductase erg24 then reduces the C14=C15 double bond which leads to 4,4-dimethylfecosterol. A sequence of further demethylations at C-4, involving the C-4 demethylation complex containing the C-4 methylsterol oxidases erg25A or erg25B, the sterol-4-alpha-carboxylate 3-dehydrogenase erg26 and the 3-keto-steroid reductase erg27, leads to the production of fecosterol via 4-methylfecosterol. The C-8 sterol isomerase erg2 then catalyzes the reaction which results in unsaturation at C-7 in the B ring of sterols and thus converts fecosterol to episterol. The sterol-C5-desaturase erg3B then catalyzes the introduction of a C-5 double bond in the B ring to produce 5-dehydroepisterol. The 2 other sterol-C5-desaturases, erg3A and erg3C, seem to be less important in ergosterol biosynthesis. The C-22 sterol desaturase erg5 further converts 5-dehydroepisterol into ergosta-5,7,22,24(28)-tetraen-3beta-ol by forming the C-22(23) double bond in the sterol side chain. Finally, ergosta-5,7,22,24(28)-tetraen-3beta-ol is substrate of the C-24(28) sterol reductases erg4A and erg4B to produce ergosterol. Possible alternative sterol biosynthetic pathways might exist from fecosterol to ergosterol, depending on the activities of the erg3 isoforms. This is C-8 sterol isomerase erg2 from Aspergillus fumigatus (strain ATCC MYA-4609 / CBS 101355 / FGSC A1100 / Af293) (Neosartorya fumigata).